The following is a 125-amino-acid chain: MAGSSLACCLLGLLALTSACYIQNCPLGGKRAVLDLDVRTCLPCGPGGKGRCFGPSICCGDELGCFVGTAEALRCQEENYLPSPCQSGQKPCGSGGRCAAAGICCSPDGCHEDPACDPEAAFSQH.

An N-terminal signal peptide occupies residues methionine 1 to alanine 19. Cysteine 20 and cysteine 25 are joined by a disulfide. A Glycine amide modification is found at glycine 28. 7 cysteine pairs are disulfide-bonded: cysteine 41-cysteine 85, cysteine 44-cysteine 58, cysteine 52-cysteine 75, cysteine 59-cysteine 65, cysteine 92-cysteine 104, cysteine 98-cysteine 116, and cysteine 105-cysteine 110.

Belongs to the vasopressin/oxytocin family. In terms of assembly, interacts with oxytocin receptor (Ki=1.5 nM). Interacts with vasopressin V1aR/AVPR1A (Ki=37 nM), V1bR/AVPR1B (Ki=222 nM), and V2R/AVPR2 receptors (Ki=823 nM).

Its subcellular location is the secreted. Its function is as follows. Neurophysin 1 specifically binds oxytocin. Functionally, oxytocin causes contraction of the smooth muscle of the uterus and of the mammary gland. Acts by binding to oxytocin receptor (OXTR). This chain is Oxytocin-neurophysin 1 (OXT), found in Bos taurus (Bovine).